The primary structure comprises 158 residues: L-alanine exporter AlaE (158 aa).

Transmembrane regions (helical) follow at residues 23-43 (FAMVVYCSVVGMMIEIFVSGM), 53-73 (LVAIPVNMVIAWPYGLYRDAV), 92-112 (VIAYITFQSPVYAAILLFVGA), and 117-137 (IITAVSSNIVVSMMMGAAYGY).

The protein belongs to the AlaE exporter family.

The protein resides in the cell inner membrane. Its function is as follows. Exports L-alanine. This Cronobacter sakazakii (strain ATCC BAA-894) (Enterobacter sakazakii) protein is L-alanine exporter AlaE.